Here is a 928-residue protein sequence, read N- to C-terminus: Isoleucine--tRNA ligase (928 aa).

Positions 57-67 (PFANGNIHMGH) match the 'HIGH' region motif. Residue Glu-552 participates in L-isoleucyl-5'-AMP binding. The short motif at 593-597 (KMSKS) is the 'KMSKS' region element. Residue Lys-596 coordinates ATP. Residues Cys-887, Cys-890, Cys-907, and Cys-910 each coordinate Zn(2+).

The protein belongs to the class-I aminoacyl-tRNA synthetase family. IleS type 1 subfamily. As to quaternary structure, monomer. Zn(2+) serves as cofactor.

The protein resides in the cytoplasm. It catalyses the reaction tRNA(Ile) + L-isoleucine + ATP = L-isoleucyl-tRNA(Ile) + AMP + diphosphate. Functionally, catalyzes the attachment of isoleucine to tRNA(Ile). As IleRS can inadvertently accommodate and process structurally similar amino acids such as valine, to avoid such errors it has two additional distinct tRNA(Ile)-dependent editing activities. One activity is designated as 'pretransfer' editing and involves the hydrolysis of activated Val-AMP. The other activity is designated 'posttransfer' editing and involves deacylation of mischarged Val-tRNA(Ile). The chain is Isoleucine--tRNA ligase from Latilactobacillus sakei subsp. sakei (strain 23K) (Lactobacillus sakei subsp. sakei).